The sequence spans 110 residues: Large ribosomal subunit protein uL22 (110 aa).

The protein belongs to the universal ribosomal protein uL22 family. As to quaternary structure, part of the 50S ribosomal subunit.

This protein binds specifically to 23S rRNA; its binding is stimulated by other ribosomal proteins, e.g. L4, L17, and L20. It is important during the early stages of 50S assembly. It makes multiple contacts with different domains of the 23S rRNA in the assembled 50S subunit and ribosome. Functionally, the globular domain of the protein is located near the polypeptide exit tunnel on the outside of the subunit, while an extended beta-hairpin is found that lines the wall of the exit tunnel in the center of the 70S ribosome. The sequence is that of Large ribosomal subunit protein uL22 from Hydrogenovibrio crunogenus (strain DSM 25203 / XCL-2) (Thiomicrospira crunogena).